Consider the following 507-residue polypeptide: MITLTPGRLTLPQLRRIARENVQIALDPASFAAIDRGAQAVADIAAKGEPAYGINTGFGRLASTHIPHDQLELLQKNLVLSHAVGVGEPMARPVVRLLMALKLSSLGRGHSGIRRVVMDALVTLFNADVLPLIPVKGSVGASGDLAPLAHMSAVLLGIGDVFIRGERASAAEGLRVAGLAPLTLEAKEGLALLNGTQASTALALDNLFAIEDLYRTALVSGALSVDAAAGSVKPFDARIHELRGHRGQIDAAAAYRSLLDGSAINVSHRDCDKVQDPYSLRCQPQVMGACLDQIRHAAGVLLIEANAVSDNPLIFPDTGEVLSGGNFHAEPVAFAADNLAIAAAEIGALAERRIALLIDATLSGLPPFLVKDGGVNSGFMIAHVTAAALASENKTLAHPASVDSLPTSANQEDHVSMATFAARKLADIAENVANILAIELLAAAQGVDLRAPHATSPALQHAMKTIRADVAHYDLDHYFAPDIAVVARRVRERAFATLSPLSFESEQ.

Positions 141 to 143 (ASG) form a cross-link, 5-imidazolinone (Ala-Gly). The residue at position 142 (Ser142) is a 2,3-didehydroalanine (Ser).

It belongs to the PAL/histidase family. Contains an active site 4-methylidene-imidazol-5-one (MIO), which is formed autocatalytically by cyclization and dehydration of residues Ala-Ser-Gly.

It localises to the cytoplasm. It carries out the reaction L-histidine = trans-urocanate + NH4(+). The protein operates within amino-acid degradation; L-histidine degradation into L-glutamate; N-formimidoyl-L-glutamate from L-histidine: step 1/3. In Burkholderia pseudomallei (strain 1106a), this protein is Histidine ammonia-lyase.